A 368-amino-acid chain; its full sequence is Histidinol-phosphate aminotransferase (368 aa).

The residue at position 223 (K223) is an N6-(pyridoxal phosphate)lysine.

Belongs to the class-II pyridoxal-phosphate-dependent aminotransferase family. Histidinol-phosphate aminotransferase subfamily. As to quaternary structure, homodimer. Pyridoxal 5'-phosphate serves as cofactor.

The enzyme catalyses L-histidinol phosphate + 2-oxoglutarate = 3-(imidazol-4-yl)-2-oxopropyl phosphate + L-glutamate. Its pathway is amino-acid biosynthesis; L-histidine biosynthesis; L-histidine from 5-phospho-alpha-D-ribose 1-diphosphate: step 7/9. The sequence is that of Histidinol-phosphate aminotransferase (hisC) from Sinorhizobium fredii (strain NBRC 101917 / NGR234).